Reading from the N-terminus, the 202-residue chain is Crustacean calcium-binding protein 23 (202 aa).

An N-acetylserine modification is found at serine 1. EF-hand domains lie at 33–68, 69–104, 105–140, and 148–185; these read SGLL…FGLD, LSDG…EMTE, PRKK…KTHP, and TEDE…LSKA. Ca(2+) is bound by residues aspartate 84, glutamate 93, aspartate 118, aspartate 122, and aspartate 129.

As to quaternary structure, monomer or disulfide-linked dimers. Striated muscle and brain.

Its function is as follows. Possibly acts as a regulatory protein and not as a calcium buffer or transport protein. The chain is Crustacean calcium-binding protein 23 from Faxonius limosus (Spinycheek crayfish).